The sequence spans 230 residues: Cytochrome c oxidase subunit 2 (230 aa).

Topologically, residues 1–29 (NNFFQGYNLLFQHSLFASYMDWFHAFNCS) are mitochondrial intermembrane. The chain crosses the membrane as a helical span at residues 30-50 (LLLGVLVFVTLLFGYLIFSTF). Residues 51-63 (YFKSKKIEYQFGE) lie on the Mitochondrial matrix side of the membrane. Residues 64–84 (LLCSIFPTIILLMQMVPSLSL) form a helical membrane-spanning segment. The Mitochondrial intermembrane segment spans residues 85–230 (LYYYGLMNLD…FKSWCFGTME (146 aa)). Cu cation-binding residues include H163, C198, E200, C202, H206, and M209. E200 provides a ligand contact to Mg(2+).

Belongs to the cytochrome c oxidase subunit 2 family. As to quaternary structure, component of the cytochrome c oxidase (complex IV, CIV), a multisubunit enzyme composed of a catalytic core of 3 subunits and several supernumerary subunits. The complex exists as a monomer or a dimer and forms supercomplexes (SCs) in the inner mitochondrial membrane with ubiquinol-cytochrome c oxidoreductase (cytochrome b-c1 complex, complex III, CIII). Cu cation serves as cofactor.

It localises to the mitochondrion inner membrane. The catalysed reaction is 4 Fe(II)-[cytochrome c] + O2 + 8 H(+)(in) = 4 Fe(III)-[cytochrome c] + 2 H2O + 4 H(+)(out). Component of the cytochrome c oxidase, the last enzyme in the mitochondrial electron transport chain which drives oxidative phosphorylation. The respiratory chain contains 3 multisubunit complexes succinate dehydrogenase (complex II, CII), ubiquinol-cytochrome c oxidoreductase (cytochrome b-c1 complex, complex III, CIII) and cytochrome c oxidase (complex IV, CIV), that cooperate to transfer electrons derived from NADH and succinate to molecular oxygen, creating an electrochemical gradient over the inner membrane that drives transmembrane transport and the ATP synthase. Cytochrome c oxidase is the component of the respiratory chain that catalyzes the reduction of oxygen to water. Electrons originating from reduced cytochrome c in the intermembrane space (IMS) are transferred via the dinuclear copper A center (CU(A)) of subunit 2 and heme A of subunit 1 to the active site in subunit 1, a binuclear center (BNC) formed by heme A3 and copper B (CU(B)). The BNC reduces molecular oxygen to 2 water molecules using 4 electrons from cytochrome c in the IMS and 4 protons from the mitochondrial matrix. The polypeptide is Cytochrome c oxidase subunit 2 (cox-2) (Caenorhabditis remanei (Caenorhabditis vulgaris)).